The chain runs to 362 residues: MHINTPVLLAIIYFLVFAPKSADAWWLLSKTDTSSANSGSSPILCKNVPGLTPQQKRMCHENPNIIKYLISGLRSALHTCEYTFQREAWNCTLTLPGVGTSPLQIASRESAYVYAISAAGVSHSLARACSKGLIDDCGCGETPQGSGSVAVSQASSRSSSDFVWAGCSDNVKFGNTFGRKFVDQYDRQHATEPRSQMNLHNNRVGRRLLVNAMNKECKCHGVSGSCVTKTCWKVMPKFDEFASRLHQKYQLAKLVTNNDQKLTVRSSPSAGSSGRSERFARNMDASSKQMRNELIYLDASPNYCAIDVKDRECGENCPNICCGRGWRTTREIVDEPCHCQFVWCCEVKCKTCKKLVERNYCL.

The first 24 residues, M1–A24, serve as a signal peptide directing secretion. Cystine bridges form between C80–C91, C129–C137, C139–C167, C217–C231, and C219–C226. The N-linked (GlcNAc...) asparagine glycan is linked to N90. S223 carries the O-palmitoleoyl serine; by mom-1 lipid modification. Residues T263 to N282 form a disordered region. Residues R265–G274 show a composition bias toward low complexity. 6 disulfides stabilise this stretch: C304–C322, C313–C317, C321–C361, C337–C352, C339–C349, and C344–C345.

It belongs to the Wnt family. Post-translationally, palmitoleoylation is required for efficient binding to frizzled receptors. Depalmitoleoylation leads to Wnt signaling pathway inhibition. In terms of tissue distribution, expressed by anchor cell and vulva precursor cell descendants P5.ppa, P5.ppp, P7.paa and P7.pap. Expressed in the tail and weakly expressed in the vulva and body wall muscles.

The protein localises to the secreted. It is found in the extracellular space. Its subcellular location is the extracellular matrix. Functionally, ligand for members of the frizzled family of seven transmembrane receptors. Required in embryonic development for endoderm specification and the correct positioning and orientation of the mitotic spindles and division planes in blastomere cells. Involved in cleavage axis determination. Binds to receptor tyrosine kinase cam-1. Together with wnt ligand lin-44, plays a role in controlling vulva precursor cell P7.p lineage orientation during vulva development, probably by acting as a ligand for tyrosine kinase receptor lin-18. May act redundantly with other Wnt ligands such as cwn-1 and cwn-2 to control seam cell polarity. The sequence is that of Protein mom-2 (mom-2) from Caenorhabditis elegans.